The primary structure comprises 357 residues: GDSL esterase/lipase At5g45950 (357 aa).

The first 23 residues, 1–23, serve as a signal peptide directing secretion; sequence MLLVAFVTLLVAVALQPLPSVLS. Asn-37 is a glycosylation site (N-linked (GlcNAc...) asparagine). Ser-47 acts as the Nucleophile in catalysis. Asn-132 is a glycosylation site (N-linked (GlcNAc...) asparagine). Residues Asp-331 and His-334 contribute to the active site.

This sequence belongs to the 'GDSL' lipolytic enzyme family.

It localises to the secreted. The chain is GDSL esterase/lipase At5g45950 from Arabidopsis thaliana (Mouse-ear cress).